The primary structure comprises 479 residues: UDP-N-acetylmuramate--L-alanine ligase (479 aa).

128 to 134 is a binding site for ATP; sequence GAHGKTT.

The protein belongs to the MurCDEF family.

The protein resides in the cytoplasm. The enzyme catalyses UDP-N-acetyl-alpha-D-muramate + L-alanine + ATP = UDP-N-acetyl-alpha-D-muramoyl-L-alanine + ADP + phosphate + H(+). The protein operates within cell wall biogenesis; peptidoglycan biosynthesis. Cell wall formation. This chain is UDP-N-acetylmuramate--L-alanine ligase, found in Psychrobacter cryohalolentis (strain ATCC BAA-1226 / DSM 17306 / VKM B-2378 / K5).